Consider the following 213-residue polypeptide: Octanoyltransferase (213 aa).

Residues 32-207 enclose the BPL/LPL catalytic domain; sequence ESTLDEIWLV…NILALLNNPD (176 aa). Substrate contacts are provided by residues 71–78, 138–140, and 151–153; these read RGGQVTYH, SLG, and GLA. Residue cysteine 169 is the Acyl-thioester intermediate of the active site.

The protein belongs to the LipB family.

It is found in the cytoplasm. It carries out the reaction octanoyl-[ACP] + L-lysyl-[protein] = N(6)-octanoyl-L-lysyl-[protein] + holo-[ACP] + H(+). Its pathway is protein modification; protein lipoylation via endogenous pathway; protein N(6)-(lipoyl)lysine from octanoyl-[acyl-carrier-protein]: step 1/2. Catalyzes the transfer of endogenously produced octanoic acid from octanoyl-acyl-carrier-protein onto the lipoyl domains of lipoate-dependent enzymes. Lipoyl-ACP can also act as a substrate although octanoyl-ACP is likely to be the physiological substrate. The polypeptide is Octanoyltransferase (Escherichia coli (strain SMS-3-5 / SECEC)).